A 414-amino-acid polypeptide reads, in one-letter code: Esterase FrsA (414 aa).

It belongs to the FrsA family.

The catalysed reaction is a carboxylic ester + H2O = an alcohol + a carboxylate + H(+). Functionally, catalyzes the hydrolysis of esters. The polypeptide is Esterase FrsA (Salmonella dublin (strain CT_02021853)).